Consider the following 92-residue polypeptide: NELL2-interacting cell ontogeny regulator 1 (92 aa).

Positions 1–30 (MALPSAWSVMRVVIPFISVLGLLGVRLVGA) are cleaved as a signal peptide.

The protein belongs to the NICOL family.

It is found in the secreted. Its subcellular location is the cytoplasm. The protein resides in the perinuclear region. Its function is as follows. mRNA-binding protein which interacts with a range of target mRNAs and may promote extracellular matrix production. May function as a component of lumicrine signaling and may play a crucial role in epididymal-mediated sperm maturation and male fertility. The sequence is that of NELL2-interacting cell ontogeny regulator 1 from Gallus gallus (Chicken).